A 662-amino-acid chain; its full sequence is Tubulin--tyrosine ligase-like protein 12 (662 aa).

Positions Leu-324–Thr-660 constitute a TTL domain. ATP-binding positions include Cys-472–Ile-475, Lys-491, and Asp-493.

Belongs to the tubulin--tyrosine ligase family.

In terms of biological role, regulates microtubule dynamics in uterine muscle cells. This Caenorhabditis elegans protein is Tubulin--tyrosine ligase-like protein 12.